The chain runs to 118 residues: UPF0148 protein LS215_1455 (118 aa).

Belongs to the UPF0148 family.

The sequence is that of UPF0148 protein LS215_1455 from Saccharolobus islandicus (strain L.S.2.15 / Lassen #1) (Sulfolobus islandicus).